The primary structure comprises 739 residues: TonB-dependent heme receptor A (739 aa).

An N-terminal signal peptide occupies residues 1–22 (MKMKKQCATLTFFIGLHGYTIA). The 113-residue stretch at 38–150 (GHHERQPDRS…FAGTIKLETK (113 aa)) folds into the TBDR plug domain. Residues 161-739 (LLGGLLKYGY…NIKLSISKQF (579 aa)) enclose the TBDR beta-barrel domain.

The protein belongs to the TonB-dependent receptor family.

It localises to the cell outer membrane. Its function is as follows. Heme receptor. The polypeptide is TonB-dependent heme receptor A (tdhA) (Haemophilus ducreyi (strain 35000HP / ATCC 700724)).